Here is a 321-residue protein sequence, read N- to C-terminus: Malate dehydrogenase (321 aa).

NAD(+) is bound by residues 13–18 and D38; that span reads GAGNIG. Residues R87 and R93 each contribute to the substrate site. NAD(+)-binding positions include N100 and 123 to 125; that span reads VTN. Substrate contacts are provided by N125 and R156. H180 serves as the catalytic Proton acceptor.

This sequence belongs to the LDH/MDH superfamily. MDH type 3 family.

It catalyses the reaction (S)-malate + NAD(+) = oxaloacetate + NADH + H(+). In terms of biological role, catalyzes the reversible oxidation of malate to oxaloacetate. The chain is Malate dehydrogenase from Anaplasma phagocytophilum (strain HZ).